The chain runs to 152 residues: Nucleoside diphosphate kinase A (152 aa).

Residues Lys-12, Phe-60, Arg-88, and Thr-94 each contribute to the ATP site. Residue Lys-100 forms a Glycyl lysine isopeptide (Lys-Gly) (interchain with G-Cter in ubiquitin) linkage. ATP is bound by residues Arg-105 and Asn-115. The active-site Pros-phosphohistidine intermediate is the His-118. Phosphoserine is present on residues Ser-120, Ser-122, and Ser-125.

Belongs to the NDK family. In terms of assembly, hexamer of two different chains: An and B (A6, A5B, A4B2, A3B3, A2B4, AB5, B6). Interacts with PRUNE1. Component of the SET complex, composed of at least ANP32A, APEX1, HMGB2, NME1, SET and TREX1. Within this complex, interacts directly with SET. Also interacts with TREX1, but only following translocation to the nucleus. Mg(2+) serves as cofactor. Isoform 1 is expressed in heart, brain, placenta, lung, liver, skeletal muscle, pancreas, spleen and thymus. Expressed in lung carcinoma cell lines but not in normal lung tissues. Isoform 2 is ubiquitously expressed and its expression is also related to tumor differentiation.

It localises to the cytoplasm. The protein resides in the nucleus. It catalyses the reaction a 2'-deoxyribonucleoside 5'-diphosphate + ATP = a 2'-deoxyribonucleoside 5'-triphosphate + ADP. The enzyme catalyses a ribonucleoside 5'-diphosphate + ATP = a ribonucleoside 5'-triphosphate + ADP. With respect to regulation, autophosphorylation at His-118 increases serine/threonine protein kinase activity of the enzyme. Interaction with the SET complex inhibits the endonuclease activity. Its function is as follows. Major role in the synthesis of nucleoside triphosphates other than ATP. The ATP gamma phosphate is transferred to the NDP beta phosphate via a ping-pong mechanism, using a phosphorylated active-site intermediate. Possesses nucleoside-diphosphate kinase, serine/threonine-specific protein kinase, geranyl and farnesyl pyrophosphate kinase, histidine protein kinase and 3'-5' exonuclease activities. Involved in cell proliferation, differentiation and development, signal transduction, G protein-coupled receptor endocytosis, and gene expression. Required for neural development including neural patterning and cell fate determination. During GZMA-mediated cell death, works in concert with TREX1. NME1 nicks one strand of DNA and TREX1 removes bases from the free 3' end to enhance DNA damage and prevent DNA end reannealing and rapid repair. The sequence is that of Nucleoside diphosphate kinase A (NME1) from Homo sapiens (Human).